A 350-amino-acid chain; its full sequence is Putative isomerase YbhH (350 aa).

It belongs to the PrpF family.

The chain is Putative isomerase YbhH (ybhH) from Escherichia coli O6:H1 (strain CFT073 / ATCC 700928 / UPEC).